A 317-amino-acid polypeptide reads, in one-letter code: uncharacterized protein (317 aa).

Low complexity predominate over residues Asp-68–Thr-78. Residues Asp-68–Ile-87 are disordered.

This is an uncharacterized protein from Methanocaldococcus jannaschii (strain ATCC 43067 / DSM 2661 / JAL-1 / JCM 10045 / NBRC 100440) (Methanococcus jannaschii).